A 304-amino-acid polypeptide reads, in one-letter code: Energy-coupling factor transporter ATP-binding protein EcfA2 (304 aa).

The 259-residue stretch at 3–261 (IIVKNISYIY…EKFLVENKLK (259 aa)) folds into the ABC transporter domain. 40-47 (GSTGSGKT) lines the ATP pocket.

It belongs to the ABC transporter superfamily. Energy-coupling factor EcfA family. As to quaternary structure, forms a stable energy-coupling factor (ECF) transporter complex composed of 2 membrane-embedded substrate-binding proteins (S component), 2 ATP-binding proteins (A component) and 2 transmembrane proteins (T component).

The protein localises to the cell membrane. In terms of biological role, ATP-binding (A) component of a common energy-coupling factor (ECF) ABC-transporter complex. Unlike classic ABC transporters this ECF transporter provides the energy necessary to transport a number of different substrates. The sequence is that of Energy-coupling factor transporter ATP-binding protein EcfA2 from Mycoplasmopsis pulmonis (strain UAB CTIP) (Mycoplasma pulmonis).